An 89-amino-acid polypeptide reads, in one-letter code: Large ribosomal subunit protein bL27 (89 aa).

The interval 1-26 (MAHKKGVGSSRNGRDSESKRLGVKEG) is disordered. The segment covering 12-26 (NGRDSESKRLGVKEG) has biased composition (basic and acidic residues).

The protein belongs to the bacterial ribosomal protein bL27 family.

The sequence is that of Large ribosomal subunit protein bL27 from Desulforamulus reducens (strain ATCC BAA-1160 / DSM 100696 / MI-1) (Desulfotomaculum reducens).